A 237-amino-acid chain; its full sequence is Ribonuclease PH (237 aa).

Residues Arg-86 and 124–126 (GTR) each bind phosphate.

The protein belongs to the RNase PH family. As to quaternary structure, homohexameric ring arranged as a trimer of dimers.

It carries out the reaction tRNA(n+1) + phosphate = tRNA(n) + a ribonucleoside 5'-diphosphate. Functionally, phosphorolytic 3'-5' exoribonuclease that plays an important role in tRNA 3'-end maturation. Removes nucleotide residues following the 3'-CCA terminus of tRNAs; can also add nucleotides to the ends of RNA molecules by using nucleoside diphosphates as substrates, but this may not be physiologically important. Probably plays a role in initiation of 16S rRNA degradation (leading to ribosome degradation) during starvation. This Shewanella pealeana (strain ATCC 700345 / ANG-SQ1) protein is Ribonuclease PH.